Reading from the N-terminus, the 223-residue chain is Rab-like protein 2A (223 aa).

GTP-binding positions include G28–S35, D76–Q80, and N133–D136. The disordered stretch occupies residues K200–S223. The segment covering G210–S223 has biased composition (polar residues).

This sequence belongs to the small GTPase superfamily. Rab family. Interacts with IFT27, IFT81, IFT172, ATP6V1E1, HK1, LDHC, MAPRE1 and HSPA2. As to expression, isoform 2 is expressed in the testis and localizes to the mid-piece of the sperm tail (at protein level). Isoform 2 is expressed at higher levels in testis than isoform 1. Isoform 1 and isoform 2 are widely expressed and notably within other tissues containing motile cilia including the lung, trachea, brain, ovary and kidney.

Its function is as follows. Plays an essential role in male fertility, sperm intra-flagellar transport, and tail assembly. Binds, in a GTP-regulated manner, to a specific set of effector proteins including key proteins involved in cilia development and function and delivers them into the growing sperm tail. The polypeptide is Rab-like protein 2A (Rabl2) (Mus musculus (Mouse)).